Consider the following 354-residue polypeptide: UDP-N-acetylglucosamine--N-acetylmuramyl-(pentapeptide) pyrophosphoryl-undecaprenol N-acetylglucosamine transferase (354 aa).

UDP-N-acetyl-alpha-D-glucosamine contacts are provided by residues 11 to 13, Arg-164, Ser-194, and Gln-289; that span reads SAG.

The protein belongs to the glycosyltransferase 28 family. MurG subfamily.

Its subcellular location is the cell membrane. The catalysed reaction is di-trans,octa-cis-undecaprenyl diphospho-N-acetyl-alpha-D-muramoyl-L-alanyl-D-glutamyl-meso-2,6-diaminopimeloyl-D-alanyl-D-alanine + UDP-N-acetyl-alpha-D-glucosamine = di-trans,octa-cis-undecaprenyl diphospho-[N-acetyl-alpha-D-glucosaminyl-(1-&gt;4)]-N-acetyl-alpha-D-muramoyl-L-alanyl-D-glutamyl-meso-2,6-diaminopimeloyl-D-alanyl-D-alanine + UDP + H(+). Its pathway is cell wall biogenesis; peptidoglycan biosynthesis. Functionally, cell wall formation. Catalyzes the transfer of a GlcNAc subunit on undecaprenyl-pyrophosphoryl-MurNAc-pentapeptide (lipid intermediate I) to form undecaprenyl-pyrophosphoryl-MurNAc-(pentapeptide)GlcNAc (lipid intermediate II). This chain is UDP-N-acetylglucosamine--N-acetylmuramyl-(pentapeptide) pyrophosphoryl-undecaprenol N-acetylglucosamine transferase, found in Shouchella clausii (strain KSM-K16) (Alkalihalobacillus clausii).